Here is a 214-residue protein sequence, read N- to C-terminus: STS14 protein (214 aa).

The signal sequence occupies residues 1–19; it reads MFVLSTAMACLVYIYIYIY. 3 consecutive repeat copies span residues 13 to 14, 15 to 16, and 17 to 18. A 3 X 2 AA tandem repeats of Y-I region spans residues 13–18; the sequence is YIYIYI. The SCP domain maps to 80–200; that stretch reads LDAHNKARSE…YEGPATLTVC (121 aa).

Belongs to the CRISP family. Highly expressed in the stigma and stylar cortex throughout pistil development. Not expressed in other organs.

Functionally, may protect the outer tissues of the pistil from pathogen attack. The sequence is that of STS14 protein (STS14) from Solanum tuberosum (Potato).